The primary structure comprises 194 residues: Large ribosomal subunit protein uL24c (194 aa).

The N-terminal 50 residues, 1–50 (MVAMAMASLQSSMSSLSLSSNSFLGQPLSPITLSPFLQGKPTEKKCLIVM), are a transit peptide targeting the chloroplast.

It belongs to the universal ribosomal protein uL24 family. In terms of assembly, part of the 50S ribosomal subunit.

It is found in the plastid. Its subcellular location is the chloroplast. Functionally, one of two assembly initiator proteins, it binds directly to the 5'-end of the 23S rRNA, where it nucleates assembly of the 50S subunit. The protein is Large ribosomal subunit protein uL24c (RPL24) of Pisum sativum (Garden pea).